Here is a 498-residue protein sequence, read N- to C-terminus: MRINPTTSSPVVSTLEEKNLGRIAQIIGPVLDVVFPPGKMPNIYNALVVKGRDTVGQQINVTCEVQQLLGNNRVRAVAMSATDGLMRGMEVIDTGAPLSVPVGGATLGRIFNVLGEPVDNLGPVDTRTTSPIHRSAPAFIQLDTKLSIFETGIKVVDLLAPYRRGGKIGLFGGAGVGKTVLIMELINNIAKAHGGVSVFGGVGERTREGNDLYMEMKESGVINEKNIAESKVALVYGQMNEPPGARMRVGLTALTMAEYFRDVNEQDVLLFIDNIFRFVQAGSEVSALLGRMPSAVGYQPTLSTEMGSLQERITSTKEGSITSIQAVYVPADDLTDPAPATTFAHLDATTVLSRVLAAKGIYPAVDPLDSTSTMLQPRIVGEEHYETAQRVKQTSQRYKELQDIIAILGLDELSEEDRLTVARARKIERFLSQPFFVAEVFTGSPGKYVGLAETIRGFQLILSGELDGLPEQAFYLVGNIDEATAKAMNLEVESKLKK.

Residue 172–179 participates in ATP binding; the sequence is GGAGVGKT.

Belongs to the ATPase alpha/beta chains family. As to quaternary structure, F-type ATPases have 2 components, CF(1) - the catalytic core - and CF(0) - the membrane proton channel. CF(1) has five subunits: alpha(3), beta(3), gamma(1), delta(1), epsilon(1). CF(0) has four main subunits: a(1), b(1), b'(1) and c(9-12).

The protein localises to the plastid. The protein resides in the chloroplast thylakoid membrane. It carries out the reaction ATP + H2O + 4 H(+)(in) = ADP + phosphate + 5 H(+)(out). Produces ATP from ADP in the presence of a proton gradient across the membrane. The catalytic sites are hosted primarily by the beta subunits. This chain is ATP synthase subunit beta, chloroplastic, found in Balaka seemannii.